The sequence spans 185 residues: MPQANLTLSPHDQQVLDSIFNPLELSSLQTNNLIPAESDLKDEEPDTQAIKASRELELKAIALSESGELDGALELFQQSLNLAQRASVLNNRAQTLRLAKRDEEALDDLNKALELANDQQTRTKCHAHCQRGVLYRKLDNLEAARADFEAAAQLGSKFAREQLVEINPYAALCNQMLRQAFDQLK.

TPR repeat units lie at residues 53–86, 88–119, and 125–158; these read SRELELKAIALSESGELDGALELFQQSLNLAQRA, VLNNRAQTLRLAKRDEEALDDLNKALELANDQ, and CHAHCQRGVLYRKLDNLEAARADFEAAAQLGSKF.

This sequence belongs to the TTC36 family.

This Drosophila melanogaster (Fruit fly) protein is Tetratricopeptide repeat protein 36 homolog.